Consider the following 600-residue polypeptide: Pyranose dehydrogenase 3 (600 aa).

Positions 1-25 are cleaved as a signal peptide; it reads MLPRVARLNTHLVSLALLGFQITYG. N-linked (GlcNAc...) asparagine glycosylation is found at asparagine 99 and asparagine 114. Histidine 127 is subject to Tele-8alpha-FAD histidine. Asparagine 173, asparagine 199, asparagine 275, asparagine 342, asparagine 399, and asparagine 507 each carry an N-linked (GlcNAc...) asparagine glycan. The active-site Proton acceptor is histidine 535. N-linked (GlcNAc...) asparagine glycosylation is present at asparagine 546. Histidine 579 is an active-site residue.

Belongs to the GMC oxidoreductase family. Monomer. FAD is required as a cofactor. Post-translationally, N-glycosylated.

The protein localises to the secreted. The catalysed reaction is pyranose + acceptor = pyranos-2-ulose + reduced acceptor.. It catalyses the reaction pyranose + acceptor = pyranos-3-ulose + reduced acceptor.. It carries out the reaction pyranose + acceptor = pyranos-2,3-diulose + reduced acceptor.. The enzyme catalyses a pyranoside + acceptor = a pyranosid-3-ulose + reduced acceptor.. The catalysed reaction is a pyranoside + acceptor = a pyranosid-3,4-diulose + reduced acceptor.. Catalyzes the single-oxidation or sequential double oxidation reaction of carbohydrates primarily at carbon-2 and/or carbon-3 with the concomitant reduction of the flavin. The enzyme exhibits a broad sugar substrate specificity, oxidizing different aldopyranoses to the corresponding C-1, C-2, C-3 or C-1,2, C-2,3 and C-3,4 (di)dehydro sugars with substrate-specific regioselectivity. Accepts only a narrow range of electron acceptors such as substituted benzoquinones and complexed metal ions and reacts extremely slowly with O(2) as acceptor. May play a role in the natural recycling of plant matter by oxidizing all major monosaccharides in lignocellulose and by reducing quinone compounds or reactive radical species generated during lignin depolymerization. The protein is Pyranose dehydrogenase 3 of Leucoagaricus meleagris (Western flat-topped agaric).